Here is a 161-residue protein sequence, read N- to C-terminus: Large ribosomal subunit protein bL9 (161 aa).

This sequence belongs to the bacterial ribosomal protein bL9 family.

In terms of biological role, binds to the 23S rRNA. The polypeptide is Large ribosomal subunit protein bL9 (Protochlamydia amoebophila (strain UWE25)).